The following is a 364-amino-acid chain: Methylenetetrahydrofolate--tRNA-(uracil-5-)-methyltransferase TrmFO (364 aa).

11–16 (GAGLAG) serves as a coordination point for FAD. Polar residues predominate over residues 335–352 (SYLNQPCSSANDPTSSLL). The tract at residues 335–364 (SYLNQPCSSANDPTSSLLDRSPAQRDIPLQ) is disordered.

It belongs to the MnmG family. TrmFO subfamily. FAD serves as cofactor.

It is found in the cytoplasm. It catalyses the reaction uridine(54) in tRNA + (6R)-5,10-methylene-5,6,7,8-tetrahydrofolate + NADH + H(+) = 5-methyluridine(54) in tRNA + (6S)-5,6,7,8-tetrahydrofolate + NAD(+). The catalysed reaction is uridine(54) in tRNA + (6R)-5,10-methylene-5,6,7,8-tetrahydrofolate + NADPH + H(+) = 5-methyluridine(54) in tRNA + (6S)-5,6,7,8-tetrahydrofolate + NADP(+). In terms of biological role, catalyzes the folate-dependent formation of 5-methyl-uridine at position 54 (M-5-U54) in all tRNAs. This chain is Methylenetetrahydrofolate--tRNA-(uracil-5-)-methyltransferase TrmFO, found in Prochlorococcus marinus (strain MIT 9313).